Consider the following 107-residue polypeptide: CLAVATA3/ESR (CLE)-related protein 10 (107 aa).

The N-terminal stretch at 1–23 is a signal peptide; sequence MKTNRNRPINILIVFFLLTTARA. N-linked (GlcNAc...) asparagine glycosylation is found at Asn27 and Asn30. The tract at residues 73 to 107 is disordered; it reads SRQPLFSPPPPPTEIDQRYGVEKRLVPSGPNPLHN. Over residues 87–97 the composition is skewed to basic and acidic residues; sequence IDQRYGVEKRL. Hydroxyproline is present on residues Pro99 and Pro102. Pro102 carries an O-linked (Ara...) hydroxyproline glycan.

The protein belongs to the CLV3/ESR signal peptide family. The O-glycosylation (arabinosylation) of the hydroxyproline Pro-102 enhances binding affinity of the CLE10p peptide for its receptor. As to expression, expressed in stems, apex, leaves, flowers, siliques and pollen.

It localises to the secreted. The protein localises to the extracellular space. Extracellular signal peptide that regulates cell fate. Represses root apical meristem maintenance. Regulates the transition of protophloem cells from proliferation to differentiation, thus impinging on postembryonic growth capacity of the root meristem; this signaling pathway requires CRN and CLV2. The chain is CLAVATA3/ESR (CLE)-related protein 10 from Arabidopsis thaliana (Mouse-ear cress).